The primary structure comprises 82 residues: uncharacterized protein (82 aa).

Helical transmembrane passes span 4 to 26 (IAVL…AGHF), 31 to 50 (FWVA…VTLA), and 55 to 77 (SFIF…TLFL).

It is found in the cell membrane. This is an uncharacterized protein from Bacillus subtilis (strain 168).